Consider the following 345-residue polypeptide: NADH-ubiquinone oxidoreductase chain 2 (345 aa).

A run of 9 helical transmembrane segments spans residues 1–21, 25–45, 60–80, 113–133, 148–168, 191–211, 239–259, 274–294, and 324–344; these read MNPI…ILAM, HWVY…PIIS, FLIQ…NAYL, FWLP…IATW, LIPT…GGLG, VIII…YMIF, IITS…PMSG, HLTP…MFYL, and SSLS…PLLI.

Belongs to the complex I subunit 2 family.

The protein localises to the mitochondrion inner membrane. It carries out the reaction a ubiquinone + NADH + 5 H(+)(in) = a ubiquinol + NAD(+) + 4 H(+)(out). Its function is as follows. Core subunit of the mitochondrial membrane respiratory chain NADH dehydrogenase (Complex I) that is believed to belong to the minimal assembly required for catalysis. Complex I functions in the transfer of electrons from NADH to the respiratory chain. The immediate electron acceptor for the enzyme is believed to be ubiquinone. The polypeptide is NADH-ubiquinone oxidoreductase chain 2 (MT-ND2) (Varanus baritji (Black-spotted ridge-tailed monitor)).